A 242-amino-acid polypeptide reads, in one-letter code: ATP-dependent dethiobiotin synthetase BioD (242 aa).

15–20 (DVGKTV) contributes to the ATP binding site. Thr19 is a binding site for Mg(2+). Residue Lys40 is part of the active site. Ser44 is a binding site for substrate. Glu117 contacts Mg(2+). ATP is bound by residues 117-120 (EGAG), 178-179 (NQ), and 208-210 (PYS).

Belongs to the dethiobiotin synthetase family. In terms of assembly, homodimer. It depends on Mg(2+) as a cofactor.

It is found in the cytoplasm. It carries out the reaction (7R,8S)-7,8-diammoniononanoate + CO2 + ATP = (4R,5S)-dethiobiotin + ADP + phosphate + 3 H(+). Its pathway is cofactor biosynthesis; biotin biosynthesis; biotin from 7,8-diaminononanoate: step 1/2. Functionally, catalyzes a mechanistically unusual reaction, the ATP-dependent insertion of CO2 between the N7 and N8 nitrogen atoms of 7,8-diaminopelargonic acid (DAPA, also called 7,8-diammoniononanoate) to form a ureido ring. In Halalkalibacterium halodurans (strain ATCC BAA-125 / DSM 18197 / FERM 7344 / JCM 9153 / C-125) (Bacillus halodurans), this protein is ATP-dependent dethiobiotin synthetase BioD.